We begin with the raw amino-acid sequence, 502 residues long: UPF0371 protein CLK_3516 (502 aa).

This sequence belongs to the UPF0371 family.

This chain is UPF0371 protein CLK_3516, found in Clostridium botulinum (strain Loch Maree / Type A3).